The chain runs to 320 residues: 1-aminocyclopropane-1-carboxylate oxidase 3 (320 aa).

One can recognise a Fe2OG dioxygenase domain in the interval 153-253 (PNFGTKVSNY…RMSLASFYNP (101 aa)). Fe cation-binding residues include histidine 177, aspartate 179, and histidine 234.

Belongs to the iron/ascorbate-dependent oxidoreductase family. Fe cation is required as a cofactor.

The enzyme catalyses 1-aminocyclopropane-1-carboxylate + L-ascorbate + O2 = ethene + L-dehydroascorbate + hydrogen cyanide + CO2 + 2 H2O. It functions in the pathway alkene biosynthesis; ethylene biosynthesis via S-adenosyl-L-methionine; ethylene from S-adenosyl-L-methionine: step 2/2. The polypeptide is 1-aminocyclopropane-1-carboxylate oxidase 3 (ACO3) (Petunia hybrida (Petunia)).